Reading from the N-terminus, the 255-residue chain is Imidazole glycerol phosphate synthase subunit HisF (255 aa).

Catalysis depends on residues D12 and D131.

This sequence belongs to the HisA/HisF family. As to quaternary structure, heterodimer of HisH and HisF.

The protein resides in the cytoplasm. It catalyses the reaction 5-[(5-phospho-1-deoxy-D-ribulos-1-ylimino)methylamino]-1-(5-phospho-beta-D-ribosyl)imidazole-4-carboxamide + L-glutamine = D-erythro-1-(imidazol-4-yl)glycerol 3-phosphate + 5-amino-1-(5-phospho-beta-D-ribosyl)imidazole-4-carboxamide + L-glutamate + H(+). It functions in the pathway amino-acid biosynthesis; L-histidine biosynthesis; L-histidine from 5-phospho-alpha-D-ribose 1-diphosphate: step 5/9. IGPS catalyzes the conversion of PRFAR and glutamine to IGP, AICAR and glutamate. The HisF subunit catalyzes the cyclization activity that produces IGP and AICAR from PRFAR using the ammonia provided by the HisH subunit. In Salinispora arenicola (strain CNS-205), this protein is Imidazole glycerol phosphate synthase subunit HisF.